The primary structure comprises 186 residues: Ribosome-recycling factor (186 aa).

This sequence belongs to the RRF family.

It localises to the cytoplasm. Responsible for the release of ribosomes from messenger RNA at the termination of protein biosynthesis. May increase the efficiency of translation by recycling ribosomes from one round of translation to another. The polypeptide is Ribosome-recycling factor (Burkholderia mallei (strain NCTC 10247)).